A 214-amino-acid polypeptide reads, in one-letter code: Ribosomal RNA small subunit methyltransferase G (214 aa).

Residues Gly-77, Leu-82, 128-129 (VE), and Arg-143 contribute to the S-adenosyl-L-methionine site.

This sequence belongs to the methyltransferase superfamily. RNA methyltransferase RsmG family.

It is found in the cytoplasm. It catalyses the reaction guanosine(527) in 16S rRNA + S-adenosyl-L-methionine = N(7)-methylguanosine(527) in 16S rRNA + S-adenosyl-L-homocysteine. Its function is as follows. Specifically methylates the N7 position of guanine in position 527 of 16S rRNA. The polypeptide is Ribosomal RNA small subunit methyltransferase G (Nitrosomonas eutropha (strain DSM 101675 / C91 / Nm57)).